We begin with the raw amino-acid sequence, 776 residues long: Methionine--tRNA ligase (776 aa).

A 'HIGH' region motif is present at residues 10–20; sequence PYSNGPIHLGH. Residues Cys-143, Cys-146, Cys-156, and Cys-159 each coordinate Zn(2+). Positions 375–379 match the 'KMSKS' region motif; sequence KFSKS. ATP is bound at residue Lys-378. In terms of domain architecture, tRNA-binding spans 676-776; that stretch reads DFAKLDMRVG…KPISLGSKVR (101 aa).

The protein belongs to the class-I aminoacyl-tRNA synthetase family. MetG type 1 subfamily. Homodimer. Requires Zn(2+) as cofactor.

Its subcellular location is the cytoplasm. The enzyme catalyses tRNA(Met) + L-methionine + ATP = L-methionyl-tRNA(Met) + AMP + diphosphate. Is required not only for elongation of protein synthesis but also for the initiation of all mRNA translation through initiator tRNA(fMet) aminoacylation. The chain is Methionine--tRNA ligase (metG) from Nanoarchaeum equitans (strain Kin4-M).